Consider the following 167-residue polypeptide: General odorant-binding protein 1 (167 aa).

A signal peptide spans 1 to 22 (MAHTLQTVVLLLGTSILHPILA). Cystine bridges form between Cys-41/Cys-76, Cys-72/Cys-130, and Cys-119/Cys-139.

Belongs to the PBP/GOBP family. As to expression, antenna.

Functionally, present in the aqueous fluid surrounding olfactory sensory dendrites and are thought to aid in the capture and transport of hydrophobic odorants into and through this fluid. This Antheraea pernyi (Chinese oak silk moth) protein is General odorant-binding protein 1.